Reading from the N-terminus, the 37-residue chain is Large ribosomal subunit protein bL36 (37 aa).

The protein belongs to the bacterial ribosomal protein bL36 family.

In Leptospira interrogans serogroup Icterohaemorrhagiae serovar copenhageni (strain Fiocruz L1-130), this protein is Large ribosomal subunit protein bL36.